Consider the following 143-residue polypeptide: MQNQNPVELIEYELTTFIRRAVYLDQSEKRTGNLERSSYLLLRQLDEFGPARVKELAESFKLDISTLSRQAAALEAKELIYRFSDPSDGRVSLFTITKLGKQLLKADQQKRLERYEQMLKEWSTQEKEMFGELLQRMNKAFID.

The HTH marR-type domain maps to 11–139 (EYELTTFIRR…FGELLQRMNK (129 aa)). The H-T-H motif DNA-binding region spans 53-76 (VKELAESFKLDISTLSRQAAALEA).

This is an uncharacterized protein from Bacillus subtilis (strain 168).